We begin with the raw amino-acid sequence, 224 residues long: Orotate phosphoribosyltransferase (224 aa).

A 5-phospho-alpha-D-ribose 1-diphosphate-binding site is contributed by lysine 29. Residue 37–38 (FF) participates in orotate binding. 5-phospho-alpha-D-ribose 1-diphosphate is bound by residues 75-76 (YK), arginine 105, lysine 106, lysine 109, histidine 111, and 130-138 (DDVITAGTS). Orotate-binding residues include threonine 134 and arginine 162.

Belongs to the purine/pyrimidine phosphoribosyltransferase family. PyrE subfamily. As to quaternary structure, homodimer. Requires Mg(2+) as cofactor.

The catalysed reaction is orotidine 5'-phosphate + diphosphate = orotate + 5-phospho-alpha-D-ribose 1-diphosphate. Its pathway is pyrimidine metabolism; UMP biosynthesis via de novo pathway; UMP from orotate: step 1/2. Its function is as follows. Catalyzes the transfer of a ribosyl phosphate group from 5-phosphoribose 1-diphosphate to orotate, leading to the formation of orotidine monophosphate (OMP). The protein is Orotate phosphoribosyltransferase of Bordetella parapertussis (strain 12822 / ATCC BAA-587 / NCTC 13253).